Reading from the N-terminus, the 743-residue chain is Phosphoribosylformylglycinamidine synthase subunit PurL (743 aa).

Residue His50 is part of the active site. ATP contacts are provided by Tyr53 and Lys92. Residue Glu94 participates in Mg(2+) binding. Substrate-binding positions include 95 to 98 (SHNH) and Arg117. His96 serves as the catalytic Proton acceptor. Residue Asp118 coordinates Mg(2+). Residue Gln241 participates in substrate binding. Asp269 serves as a coordination point for Mg(2+). A substrate-binding site is contributed by 313 to 315 (ESQ). Asp494 and Gly531 together coordinate ATP. Asn532 contributes to the Mg(2+) binding site. Ser534 contacts substrate.

The protein belongs to the FGAMS family. In terms of assembly, monomer. Part of the FGAM synthase complex composed of 1 PurL, 1 PurQ and 2 PurS subunits.

The protein resides in the cytoplasm. It catalyses the reaction N(2)-formyl-N(1)-(5-phospho-beta-D-ribosyl)glycinamide + L-glutamine + ATP + H2O = 2-formamido-N(1)-(5-O-phospho-beta-D-ribosyl)acetamidine + L-glutamate + ADP + phosphate + H(+). It functions in the pathway purine metabolism; IMP biosynthesis via de novo pathway; 5-amino-1-(5-phospho-D-ribosyl)imidazole from N(2)-formyl-N(1)-(5-phospho-D-ribosyl)glycinamide: step 1/2. In terms of biological role, part of the phosphoribosylformylglycinamidine synthase complex involved in the purines biosynthetic pathway. Catalyzes the ATP-dependent conversion of formylglycinamide ribonucleotide (FGAR) and glutamine to yield formylglycinamidine ribonucleotide (FGAM) and glutamate. The FGAM synthase complex is composed of three subunits. PurQ produces an ammonia molecule by converting glutamine to glutamate. PurL transfers the ammonia molecule to FGAR to form FGAM in an ATP-dependent manner. PurS interacts with PurQ and PurL and is thought to assist in the transfer of the ammonia molecule from PurQ to PurL. This chain is Phosphoribosylformylglycinamidine synthase subunit PurL, found in Sinorhizobium medicae (strain WSM419) (Ensifer medicae).